We begin with the raw amino-acid sequence, 292 residues long: tRNA-cytidine(32) 2-sulfurtransferase (292 aa).

The PP-loop motif signature appears at 53 to 58 (SGGKDS). The [4Fe-4S] cluster site is built by Cys-128, Cys-131, and Cys-219.

Belongs to the TtcA family. In terms of assembly, homodimer. Mg(2+) is required as a cofactor. The cofactor is [4Fe-4S] cluster.

The protein localises to the cytoplasm. It carries out the reaction cytidine(32) in tRNA + S-sulfanyl-L-cysteinyl-[cysteine desulfurase] + AH2 + ATP = 2-thiocytidine(32) in tRNA + L-cysteinyl-[cysteine desulfurase] + A + AMP + diphosphate + H(+). Its pathway is tRNA modification. Its function is as follows. Catalyzes the ATP-dependent 2-thiolation of cytidine in position 32 of tRNA, to form 2-thiocytidine (s(2)C32). The sulfur atoms are provided by the cysteine/cysteine desulfurase (IscS) system. The polypeptide is tRNA-cytidine(32) 2-sulfurtransferase (Cereibacter sphaeroides (strain ATCC 17023 / DSM 158 / JCM 6121 / CCUG 31486 / LMG 2827 / NBRC 12203 / NCIMB 8253 / ATH 2.4.1.) (Rhodobacter sphaeroides)).